Consider the following 446-residue polypeptide: N-succinylarginine dihydrolase (446 aa).

Substrate is bound by residues 19–28 (AGLSFGNVAS), asparagine 110, and 137–138 (HR). The active site involves glutamate 174. Residue arginine 213 coordinates substrate. Histidine 249 is an active-site residue. Substrate is bound by residues aspartate 251 and asparagine 364. The Nucleophile role is filled by cysteine 370.

It belongs to the succinylarginine dihydrolase family. As to quaternary structure, homodimer.

The enzyme catalyses N(2)-succinyl-L-arginine + 2 H2O + 2 H(+) = N(2)-succinyl-L-ornithine + 2 NH4(+) + CO2. The protein operates within amino-acid degradation; L-arginine degradation via AST pathway; L-glutamate and succinate from L-arginine: step 2/5. Functionally, catalyzes the hydrolysis of N(2)-succinylarginine into N(2)-succinylornithine, ammonia and CO(2). This chain is N-succinylarginine dihydrolase, found in Paraburkholderia xenovorans (strain LB400).